A 367-amino-acid polypeptide reads, in one-letter code: Oleoyl-acyl carrier protein thioesterase 2, chloroplastic (367 aa).

Residues 1 to 48 (MLKLSCNVTDHIHNLFSNSRRIFVPVHRQTRPISCFQLKKEPLRAILS) constitute a chloroplast transit peptide. Residues Asn263, His265, and Cys300 contribute to the active site.

The protein belongs to the acyl-ACP thioesterase family.

It localises to the plastid. The protein resides in the chloroplast. It catalyses the reaction (9Z)-octadecenoyl-[ACP] + H2O = (9Z)-octadecenoate + holo-[ACP] + H(+). Functionally, plays an essential role in chain termination during de novo fatty acid synthesis. Possesses high thioesterase activity for oleoyl-ACP versus other acyl-ACPs. In Arabidopsis thaliana (Mouse-ear cress), this protein is Oleoyl-acyl carrier protein thioesterase 2, chloroplastic (FATA2).